Here is a 285-residue protein sequence, read N- to C-terminus: uncharacterized protein (285 aa).

A run of 6 helical transmembrane segments spans residues 7-29, 49-71, 95-117, 137-156, 232-254, and 259-281; these read FYRLVKNTLLTAFILSLILLTLQ, LVVWNAYYTYFFIPEGVILSTFF, IFLYCSIPFLTFFLISALLSNTL, FFSEVPAGTFVSFGAVVLHA, KVVNYVNVATLPLFFFLSFTVAL, and GGLSYYAFASLFIVVHQLIIFVV.

It is found in the cell membrane. This is an uncharacterized protein from Aquifex aeolicus (strain VF5).